The sequence spans 373 residues: Secondary metabolism regulator laeA (373 aa).

The tract at residues 55–81 (ERDPAAGRWHANGSPSINSTSSKNPDR) is disordered. Polar residues predominate over residues 67–77 (GSPSINSTSSK).

This sequence belongs to the methyltransferase superfamily. LaeA methyltransferase family. In terms of assembly, component of the heterotrimeric velvet complex composed of laeA, veA and velB; VeA acting as a bridging protein between laeA and velB.

The protein localises to the nucleus. It catalyses the reaction L-methionyl-[protein] + S-adenosyl-L-methionine = S-methyl-L-methionyl-[protein] + S-adenosyl-L-homocysteine. Its function is as follows. Methyltransferase that performs automethylation. No other methyl-accepting substrate has been identified yet. Component of the velvet transcription factor complex that acts as a global regulator for secondary metabolite gene expression. Positively controls expression of 20% to 40% of major classes of secondary metabolite biosynthesis genes such as nonribosomal peptide synthetases, polyketide synthases, and P450 monooxygenases. Controls the expression of the gliotoxin gene cluster. Controls the expression of the fumitremorgin, fumagillin, and pseurotin gene clusters, where genes for fumagillin and pseurotin are physically intertwined in a single supercluster. Regulates the biosynthetic genes required for endocrocin production. Secondary metabolites under the transcriptional regulation of laeA are necessary for inhibition of angiogenesis during invasive infection in mice. Controls the expression of cell surface rodA, a hydrophobin that acts as an antiphagocytic molecule. Also regulates the expression of genes involved in conidial biosynthesis. The chain is Secondary metabolism regulator laeA from Aspergillus fumigatus (strain ATCC MYA-4609 / CBS 101355 / FGSC A1100 / Af293) (Neosartorya fumigata).